The following is a 274-amino-acid chain: MKKKIKKHLPLKRFSQNFLINQNLIKKIVKFINPQLKQTLVEIGPGLGALTKPICNIVDELIVIEIDLNLLNFLKKYSFYSKLIVFCQDALIFDYLNLFYKKNKLIRIFGNLPYHISTSLLFCFFEKNKIIQDMNFMLQKEVAERLIAFPGTKSYGRLSIIAQYYCNIKIIFNVASENFRPIPKIDSTFVNLVPHKKSPYFTHDIKVLSYITNLAFQKRRKILRHSLGKIFSEKIFLKLNVDPKLRAENLSILQYCQLSNYIIENDILKNKNFN.

Residues Asn17, Leu19, Gly44, Glu65, Asp89, and Asn111 each contribute to the S-adenosyl-L-methionine site.

The protein belongs to the class I-like SAM-binding methyltransferase superfamily. rRNA adenine N(6)-methyltransferase family. RsmA subfamily.

It is found in the cytoplasm. It catalyses the reaction adenosine(1518)/adenosine(1519) in 16S rRNA + 4 S-adenosyl-L-methionine = N(6)-dimethyladenosine(1518)/N(6)-dimethyladenosine(1519) in 16S rRNA + 4 S-adenosyl-L-homocysteine + 4 H(+). In terms of biological role, specifically dimethylates two adjacent adenosines (A1518 and A1519) in the loop of a conserved hairpin near the 3'-end of 16S rRNA in the 30S particle. May play a critical role in biogenesis of 30S subunits. The chain is Ribosomal RNA small subunit methyltransferase A from Buchnera aphidicola subsp. Schizaphis graminum (strain Sg).